Here is a 282-residue protein sequence, read N- to C-terminus: Heme oxygenase 1, chloroplastic (282 aa).

A chloroplast-targeting transit peptide spans 1–56 (MASATVVSQIQSLYIIKPRLSPPPPPHRQFRSIYFPTTRLLQQHRFRQMKSVVIVP). His-86 serves as a coordination point for heme b.

The protein belongs to the heme oxygenase family. Highly expressed in root nodules and, to a lower extent, in leaves, shoots, roots, flowers and pods (at protein level).

It is found in the plastid. The protein resides in the chloroplast. The catalysed reaction is heme b + 3 reduced [NADPH--hemoprotein reductase] + 3 O2 = biliverdin IXalpha + CO + Fe(2+) + 3 oxidized [NADPH--hemoprotein reductase] + 3 H2O + H(+). Key enzyme in the synthesis of the chromophore of the phytochrome family of plant photoreceptors. Catalyzes the opening of the heme ring to form the open-chain tetrapyrrole biliverdin IX with the release of iron and carbon monoxide (CO). Produces specifically the biliverdin IX-alpha isomer. Can form complex with heme, is ferredoxin-dependent and its activity is increased in the presence of ascorbate. May affect the plastid-to-nucleus signaling pathway by perturbing tetrapyrrole synthesis. The plastid-to-nucleus signal plays an important role in the coordinated expression of both nuclear- and chloroplast-localized genes that encode photosynthesis-related proteins. Required for efficient symbiotic nitrogen fixation (SNF) in root nodules. Responsible for heme catabolism in uninfected nodule interstitial cells (UC), preventing superoxide production under stressful conditions (e.g. nitrate exposure and darkness) and catalyzing biliverdin (BV) production in senescing green nodules. The sequence is that of Heme oxygenase 1, chloroplastic from Lotus japonicus (Lotus corniculatus var. japonicus).